A 347-amino-acid chain; its full sequence is Quinolinate synthase (347 aa).

Positions 47 and 68 each coordinate iminosuccinate. A [4Fe-4S] cluster-binding site is contributed by Cys113. Iminosuccinate contacts are provided by residues 139–141 (YAN) and Ser156. Cys200 serves as a coordination point for [4Fe-4S] cluster. Iminosuccinate contacts are provided by residues 226 to 228 (HPE) and Thr243. [4Fe-4S] cluster is bound at residue Cys297.

The protein belongs to the quinolinate synthase family. Type 1 subfamily. [4Fe-4S] cluster is required as a cofactor.

The protein localises to the cytoplasm. It carries out the reaction iminosuccinate + dihydroxyacetone phosphate = quinolinate + phosphate + 2 H2O + H(+). It participates in cofactor biosynthesis; NAD(+) biosynthesis; quinolinate from iminoaspartate: step 1/1. In terms of biological role, catalyzes the condensation of iminoaspartate with dihydroxyacetone phosphate to form quinolinate. The chain is Quinolinate synthase from Escherichia coli O139:H28 (strain E24377A / ETEC).